Consider the following 603-residue polypeptide: Elongation factor 4 (603 aa).

Residues 7 to 189 enclose the tr-type G domain; that stretch reads VRIRNFCIIA…AVVERIPPPP (183 aa). Residues 19–24 and 136–139 each bind GTP; these read DHGKST and NKID.

The protein belongs to the TRAFAC class translation factor GTPase superfamily. Classic translation factor GTPase family. LepA subfamily.

It is found in the cell inner membrane. The enzyme catalyses GTP + H2O = GDP + phosphate + H(+). Its function is as follows. Required for accurate and efficient protein synthesis under certain stress conditions. May act as a fidelity factor of the translation reaction, by catalyzing a one-codon backward translocation of tRNAs on improperly translocated ribosomes. Back-translocation proceeds from a post-translocation (POST) complex to a pre-translocation (PRE) complex, thus giving elongation factor G a second chance to translocate the tRNAs correctly. Binds to ribosomes in a GTP-dependent manner. The sequence is that of Elongation factor 4 from Nostoc punctiforme (strain ATCC 29133 / PCC 73102).